The chain runs to 377 residues: Lactosylceramide 1,3-N-acetyl-beta-D-glucosaminyltransferase (377 aa).

The Cytoplasmic segment spans residues 1–12 (MLISARRLRRCQ). Residues 13–30 (FFQLLTSCFVLSLMALLV) traverse the membrane as a helical; Signal-anchor for type II membrane protein segment. Over 31–377 (QEDNSLINHV…DTYPCSAAWS (347 aa)) the chain is Lumenal. Asn56, Asn167, and Asn275 each carry an N-linked (GlcNAc...) asparagine glycan.

Belongs to the glycosyltransferase 31 family.

Its subcellular location is the golgi apparatus membrane. It catalyses the reaction a beta-D-Gal-(1-&gt;4)-beta-D-Glc-(1&lt;-&gt;1)-Cer(d18:1(4E)) + UDP-N-acetyl-alpha-D-glucosamine = a beta-D-GlcNAc-(1-&gt;3)-beta-D-Gal-(1-&gt;4)-beta-D-Glc-(1&lt;-&gt;1)-Cer(d18:1(4E)) + UDP + H(+). The catalysed reaction is a neolactoside nLc4Cer(d18:1(4E)) + UDP-N-acetyl-alpha-D-glucosamine = a neolactoside IV(3)-beta-GlcNAc-nLc4Cer(d18:1(4E)) + UDP + H(+). Its pathway is protein modification; protein glycosylation. In terms of biological role, beta-1,3-N-acetylglucosaminyltransferase that plays a key role in the synthesis of lacto- or neolacto-series carbohydrate chains on glycolipids. The chain is Lactosylceramide 1,3-N-acetyl-beta-D-glucosaminyltransferase (b3gnt5) from Xenopus tropicalis (Western clawed frog).